Here is a 951-residue protein sequence, read N- to C-terminus: Bromodomain-containing protein 8 (951 aa).

The residue at position 85 (Lys-85) is an N6-acetyllysine. Positions 97-171 (VRKLTAERVE…ATDAAYQARQ (75 aa)) form a coiled coil. The disordered stretch occupies residues 161–273 (KATDAAYQAR…TPPPSPLLSE (113 aa)). Polar residues predominate over residues 204-226 (TPTTMEEATSGVTPGTLPSTPVT). Phosphoserine is present on residues Ser-456 and Ser-460. The disordered stretch occupies residues 520–547 (EENDDPQSLPGPWEHPIQQERDKPVPLP). A Glycyl lysine isopeptide (Lys-Gly) (interchain with G-Cter in SUMO2) cross-link involves residue Lys-542. Position 554 is an N6-acetyllysine; alternate (Lys-554). Lys-554 is covalently cross-linked (Glycyl lysine isopeptide (Lys-Gly) (interchain with G-Cter in SUMO1); alternate). Lys-554 participates in a covalent cross-link: Glycyl lysine isopeptide (Lys-Gly) (interchain with G-Cter in SUMO2); alternate. Lys-582 participates in a covalent cross-link: Glycyl lysine isopeptide (Lys-Gly) (interchain with G-Cter in SUMO2). The interval 584-745 (EPTEPEPGMS…PVSESDDGFS (162 aa)) is disordered. The segment covering 610 to 622 (PELRSQDSDEEPR) has biased composition (basic and acidic residues). Lys-648 participates in a covalent cross-link: Glycyl lysine isopeptide (Lys-Gly) (interchain with G-Cter in SUMO2). Ser-652 is modified (phosphoserine). Over residues 673–688 (ETQHKFEMSDSLKEES) the composition is skewed to basic and acidic residues. Residue Lys-685 forms a Glycyl lysine isopeptide (Lys-Gly) (interchain with G-Cter in SUMO2) linkage. Phosphoserine is present on residues Ser-694, Ser-710, and Ser-714. A Bromo domain is found at 779–884 (IQAQKIWKKA…RDVLEQIQQF (106 aa)). The segment at 900-922 (AKSLRGRDSTRKQDASEKDSVPM) is disordered. The segment covering 904 to 919 (RGRDSTRKQDASEKDS) has biased composition (basic and acidic residues).

Component of the NuA4 histone acetyltransferase complex which contains the catalytic subunit KAT5/TIP60 and the subunits EP400, TRRAP/PAF400, BRD8/SMAP, EPC1, DMAP1/DNMAP1, RUVBL1/TIP49, RUVBL2, ING3, actin, ACTL6A/BAF53A, MORF4L1/MRG15, MORF4L2/MRGX, MRGBP, YEATS4/GAS41, VPS72/YL1 and MEAF6. Component of a NuA4-related complex which contains EP400, TRRAP/PAF400, SRCAP, BRD8/SMAP, EPC1, DMAP1/DNMAP1, RUVBL1/TIP49, RUVBL2, actin, ACTL6A/BAF53A, VPS72 and YEATS4/GAS41. BRD8 isoform 2 interacts with RXRA/NR2B1 and THRB/ERBA2. Component of a SWR1-like complex.

The protein resides in the nucleus. In terms of biological role, may act as a coactivator during transcriptional activation by hormone-activated nuclear receptors (NR). Stimulates transcriptional activation by AR/DHTR, ESR1/NR3A1, RXRA/NR2B1 and THRB/ERBA2. Component of the NuA4 histone acetyltransferase (HAT) complex which is involved in transcriptional activation of select genes principally by acetylation of nucleosomal histones H4 and H2A. This modification may both alter nucleosome - DNA interactions and promote interaction of the modified histones with other proteins which positively regulate transcription. This complex may be required for the activation of transcriptional programs associated with oncogene and proto-oncogene mediated growth induction, tumor suppressor mediated growth arrest and replicative senescence, apoptosis, and DNA repair. NuA4 may also play a direct role in DNA repair when recruited to sites of DNA damage. Component of a SWR1-like complex that specifically mediates the removal of histone H2A.Z/H2AZ1 from the nucleosome. This Mus musculus (Mouse) protein is Bromodomain-containing protein 8 (Brd8).